Here is a 49-residue protein sequence, read N- to C-terminus: Protein OPG059 (49 aa).

A topological domain (virion surface) is located at residue M1. A helical membrane pass occupies residues 2 to 22 (VIGLVIFVSVAAAIVGVLSNV). Over 23–49 (LDMLMYVEENNEEDARIKEEQELLLLY) the chain is Intravirion.

This sequence belongs to the orthopoxvirus OPG058 family.

It is found in the virion membrane. It localises to the host membrane. May play a role in cell adhesion and is important for virus virulence in vivo, although it is not required for the virus life cycle in cell cultures. In Vaccinia virus (strain Western Reserve) (VACV), this protein is Protein OPG059 (OPG059).